Here is a 711-residue protein sequence, read N- to C-terminus: Ent-copalyl diphosphate synthase 1 (711 aa).

Lysine 145 contacts substrate. Positions 277 and 279 each coordinate Mg(2+). A DXDD motif motif is present at residues 277 to 280 (DIDD). Residue lysine 364 participates in substrate binding.

The protein belongs to the terpene synthase family. Tpsc subfamily. The cofactor is Mg(2+).

It carries out the reaction (2E,6E,10E)-geranylgeranyl diphosphate = ent-copalyl diphosphate. Its pathway is secondary metabolite biosynthesis; terpenoid biosynthesis. In terms of biological role, involved in the biosynthesis of ent-kaurene diterpenoids natural products such as oridonin, miltiradiene, eriocalyxin B and nezukol, known to exhibit antitumor, anti-inflammatory and antibacterial activities. Catalyzes the conversion of (2E,6E,10E)-geranylgeranyl diphosphate (GGPP) to ent-copalyl diphosphate (ent-CPP). The chain is Ent-copalyl diphosphate synthase 1 from Isodon japonicus (Scutellaria japonica).